A 653-amino-acid chain; its full sequence is Beta-galactosidase (653 aa).

Residues 1 to 22 form the signal peptide; the sequence is MPGVVRLLALLLVPLLLGSARG. A propeptide spanning residues 23–27 is cleaved from the precursor; it reads LHNAT. The N-linked (GlcNAc...) asparagine glycan is linked to asparagine 25. Tyrosine 82 contributes to the substrate binding site. The N-linked (GlcNAc...) asparagine glycan is linked to asparagine 96. Substrate-binding residues include glutamate 128 and asparagine 186. Glutamate 187 acts as the Proton donor in catalysis. Cysteine 194 and cysteine 229 are disulfide-bonded. Residue asparagine 246 is glycosylated (N-linked (GlcNAc...) asparagine). Glutamate 267 acts as the Nucleophile in catalysis. Residue tyrosine 332 coordinates substrate. Asparagine 463, asparagine 497, and asparagine 554 each carry an N-linked (GlcNAc...) asparagine glycan. The cysteines at positions 625 and 633 are disulfide-linked.

The protein belongs to the glycosyl hydrolase 35 family. As to quaternary structure, homodimer. May form higher multimers.

The protein resides in the lysosome. It catalyses the reaction Hydrolysis of terminal non-reducing beta-D-galactose residues in beta-D-galactosides.. Its function is as follows. Cleaves beta-linked terminal galactosyl residues from gangliosides, glycoproteins, and glycosaminoglycans. The polypeptide is Beta-galactosidase (GLB1) (Bos taurus (Bovine)).